The primary structure comprises 246 residues: Ribonuclease PH (246 aa).

Phosphate contacts are provided by residues R91 and G129 to R131.

It belongs to the RNase PH family. In terms of assembly, homohexameric ring arranged as a trimer of dimers.

It catalyses the reaction tRNA(n+1) + phosphate = tRNA(n) + a ribonucleoside 5'-diphosphate. Functionally, phosphorolytic 3'-5' exoribonuclease that plays an important role in tRNA 3'-end maturation. Removes nucleotide residues following the 3'-CCA terminus of tRNAs; can also add nucleotides to the ends of RNA molecules by using nucleoside diphosphates as substrates, but this may not be physiologically important. Probably plays a role in initiation of 16S rRNA degradation (leading to ribosome degradation) during starvation. The protein is Ribonuclease PH of Burkholderia ambifaria (strain ATCC BAA-244 / DSM 16087 / CCUG 44356 / LMG 19182 / AMMD) (Burkholderia cepacia (strain AMMD)).